Reading from the N-terminus, the 147-residue chain is Lipoprotein YafY (147 aa).

An N-terminal signal peptide occupies residues 1–20; sequence MKRKTLPLLALVATTLFLIA. Cys-21 carries the N-palmitoyl cysteine lipid modification. A lipid anchor (S-diacylglycerol cysteine) is attached at Cys-21.

This sequence to E.coli YfjS.

The protein resides in the cell inner membrane. In terms of biological role, when overproduced strongly induces degP through the activation of the two-component envelope stress response system CpxA/CpxR. In Escherichia coli (strain K12), this protein is Lipoprotein YafY (yafY).